Reading from the N-terminus, the 576-residue chain is MNIFNQLKQDIIAASKQLYNNQEIANTANIETPKDNFNGDLSSNIAMIIAAKESISPREVALKFKEVLTTLPYIASIEIAGPGFINFTIKAESWQASIKDILQHEEKFFEIDIDKSRNINIEYVSANPTGPMHIGHARGAVYGDVLARILQKVGYSVTKEYYVNDAGSQINDLVSTVLLRYREALGEKITIPAGLYPGEYLIPLGQILAKEYGNKLLTMNENERFKIVKNFAVEKMLDLNRKDLADLGIKHDIFFSEQSLHDKGEIEGTVKLLTGMGLIYEGTLPAPKGKVHEEWDNRVQKLFKSTNYGDSQDRPIEKADGSWSYFASDLAYAKDKIDRGANHLIYVLGADHSGYVKRIEAIVKALGKEQVKVDVKICQLVNFVENGVPVKMSKRLGNFASVQDVNHEVGKDIIRFMMLTRQNDKPLDFDLVKVKEQSRENPIFYVQYAHVRTISILSKARELMPESYNNFEEGKYDLSLLSSEEEIEIIKLLASWTKTLEASAKYFEPHRIAFYLINLASRFHSMWNFGKENSDYRFVIESNKELTLARLALASAIQKVIASGLEVIGVEPMDRM.

A 'HIGH' region motif is present at residues 126-136 (ANPTGPMHIGH).

Belongs to the class-I aminoacyl-tRNA synthetase family. Monomer.

Its subcellular location is the cytoplasm. It catalyses the reaction tRNA(Arg) + L-arginine + ATP = L-arginyl-tRNA(Arg) + AMP + diphosphate. The protein is Arginine--tRNA ligase of Rickettsia felis (strain ATCC VR-1525 / URRWXCal2) (Rickettsia azadi).